The chain runs to 556 residues: Formate--tetrahydrofolate ligase (556 aa).

Thr-65–Ser-72 contributes to the ATP binding site.

This sequence belongs to the formate--tetrahydrofolate ligase family.

The enzyme catalyses (6S)-5,6,7,8-tetrahydrofolate + formate + ATP = (6R)-10-formyltetrahydrofolate + ADP + phosphate. It functions in the pathway one-carbon metabolism; tetrahydrofolate interconversion. The chain is Formate--tetrahydrofolate ligase from Elusimicrobium minutum (strain Pei191).